Reading from the N-terminus, the 589-residue chain is Arginine--tRNA ligase (589 aa).

The 'HIGH' region signature appears at 123 to 133 (ANVAKPMHVGH).

This sequence belongs to the class-I aminoacyl-tRNA synthetase family. Monomer.

It is found in the cytoplasm. It catalyses the reaction tRNA(Arg) + L-arginine + ATP = L-arginyl-tRNA(Arg) + AMP + diphosphate. This Hyphomonas neptunium (strain ATCC 15444) protein is Arginine--tRNA ligase.